The chain runs to 270 residues: 4-hydroxy-tetrahydrodipicolinate reductase (270 aa).

7–12 (GANGRM) serves as a coordination point for NAD(+). R34 lines the NADP(+) pocket. NAD(+) contacts are provided by residues 97–99 (GTT) and 121–124 (SGNM). The active-site Proton donor/acceptor is H155. H156 contributes to the (S)-2,3,4,5-tetrahydrodipicolinate binding site. The active-site Proton donor is K159. Position 165–166 (165–166 (GT)) interacts with (S)-2,3,4,5-tetrahydrodipicolinate.

This sequence belongs to the DapB family.

It localises to the cytoplasm. It catalyses the reaction (S)-2,3,4,5-tetrahydrodipicolinate + NAD(+) + H2O = (2S,4S)-4-hydroxy-2,3,4,5-tetrahydrodipicolinate + NADH + H(+). It carries out the reaction (S)-2,3,4,5-tetrahydrodipicolinate + NADP(+) + H2O = (2S,4S)-4-hydroxy-2,3,4,5-tetrahydrodipicolinate + NADPH + H(+). It functions in the pathway amino-acid biosynthesis; L-lysine biosynthesis via DAP pathway; (S)-tetrahydrodipicolinate from L-aspartate: step 4/4. Catalyzes the conversion of 4-hydroxy-tetrahydrodipicolinate (HTPA) to tetrahydrodipicolinate. This is 4-hydroxy-tetrahydrodipicolinate reductase from Bartonella tribocorum (strain CIP 105476 / IBS 506).